The following is a 321-amino-acid chain: MAAAEAPRLAGMVVALQANFLEVELETFNPSSLVSWRRSTDAEPLRLLCTRRTRLDHRGAAVHVGDRVWVEAIDWQERRAVVGDVEPRQSWINRPPVANVTAVVVALAVKQPCFDADQASRFLLSAEQTGVDVHLILTKRDLITSDQLEQQLVRLRGWGYRPMAVSVQTGEGLGALKNKLSSTRLAVFCGPSGVGKTSLLNQLLPQLSLRVGAVSGRLQRGRHTTRHVELFRLCEGSLVADTPGFNRPELPADPRKLAVLFPEFDGQIEDYPCRFRDCFHRDEPGCGVDKSWERYPIYKRFLEEMECLSRSSRGGSGSGLL.

The region spanning 89 to 248 (QSWINRPPVA…VADTPGFNRP (160 aa)) is the CP-type G domain. Residues 138–141 (TKRD) and 190–198 (GPSGVGKTS) each bind GTP. C273, C278, H280, and C286 together coordinate Zn(2+).

It belongs to the TRAFAC class YlqF/YawG GTPase family. RsgA subfamily. In terms of assembly, monomer. Associates with 30S ribosomal subunit, binds 16S rRNA. Zn(2+) serves as cofactor.

The protein localises to the cytoplasm. Functionally, one of several proteins that assist in the late maturation steps of the functional core of the 30S ribosomal subunit. Helps release RbfA from mature subunits. May play a role in the assembly of ribosomal proteins into the subunit. Circularly permuted GTPase that catalyzes slow GTP hydrolysis, GTPase activity is stimulated by the 30S ribosomal subunit. The polypeptide is Small ribosomal subunit biogenesis GTPase RsgA (Prochlorococcus marinus (strain MIT 9303)).